The chain runs to 146 residues: uncharacterized protein (146 aa).

This is an uncharacterized protein from Aquifex aeolicus (strain VF5).